The chain runs to 79 residues: CDC42 small effector protein 1 (79 aa).

2 S-palmitoyl cysteine lipidation sites follow: C10 and C11. The CRIB domain maps to 30 to 43 (IGEPMNFVHLTHIG). Residues 41 to 79 (HIGSGDMGASDGLPRAGGVQEQMRSKCGRDRQWSNSGVL) form a disordered region. Basic and acidic residues predominate over residues 63-72 (MRSKCGRDRQ).

It belongs to the CDC42SE/SPEC family.

It is found in the cytoplasm. The protein resides in the cytoskeleton. Its subcellular location is the cell membrane. Functionally, probably involved in the organization of the actin cytoskeleton by acting downstream of CDC42, inducing actin filament assembly. The chain is CDC42 small effector protein 1 (cdc42se1) from Xenopus tropicalis (Western clawed frog).